The sequence spans 86 residues: Translation initiation factor IF-1 (86 aa).

Residues 1–72 form the S1-like domain; that stretch reads MPKDDVIKME…TKGRIVYRKK (72 aa).

The protein belongs to the IF-1 family. As to quaternary structure, component of the 30S ribosomal translation pre-initiation complex which assembles on the 30S ribosome in the order IF-2 and IF-3, IF-1 and N-formylmethionyl-tRNA(fMet); mRNA recruitment can occur at any time during PIC assembly.

It localises to the cytoplasm. Functionally, one of the essential components for the initiation of protein synthesis. Stabilizes the binding of IF-2 and IF-3 on the 30S subunit to which N-formylmethionyl-tRNA(fMet) subsequently binds. Helps modulate mRNA selection, yielding the 30S pre-initiation complex (PIC). Upon addition of the 50S ribosomal subunit IF-1, IF-2 and IF-3 are released leaving the mature 70S translation initiation complex. In Pseudothermotoga lettingae (strain ATCC BAA-301 / DSM 14385 / NBRC 107922 / TMO) (Thermotoga lettingae), this protein is Translation initiation factor IF-1.